Consider the following 186-residue polypeptide: Ribosome-recycling factor (186 aa).

It belongs to the RRF family.

Its subcellular location is the cytoplasm. Functionally, responsible for the release of ribosomes from messenger RNA at the termination of protein biosynthesis. May increase the efficiency of translation by recycling ribosomes from one round of translation to another. The polypeptide is Ribosome-recycling factor (Amoebophilus asiaticus (strain 5a2)).